Here is a 331-residue protein sequence, read N- to C-terminus: Putative ankyrin repeat protein RBE_0261 (331 aa).

An ANK repeat occupies 94 to 159 (QGENVIHKCV…KAKNTLLNIV (66 aa)).

This is Putative ankyrin repeat protein RBE_0261 from Rickettsia bellii (strain RML369-C).